A 663-amino-acid chain; its full sequence is Nuclear receptor-binding protein homolog (663 aa).

A compositionally biased stretch (low complexity) spans 1-14; it reads MSNSQANAGSSGSA. Residues 1–112 are disordered; that stretch reads MSNSQANAGS…SEDESEILEE (112 aa). Polar residues predominate over residues 19 to 46; it reads LNPSGSATLVPNLTTTNASSQATPASTI. Low complexity-rich tracts occupy residues 47 to 57 and 81 to 94; these read PQQQQPQQSQP and VVVAGGSEGVNLDS. Acidic residues predominate over residues 101–111; the sequence is DDSEDESEILE. Residues 122 to 392 form the Protein kinase domain; sequence REEVDQRDVP…ANDLLFHPLL (271 aa). Disordered regions lie at residues 481 to 505 and 638 to 663; these read PNFRSRAASPERADSVKSATPEPVD and YVPQDQQQYQQQQQEADVDQSGTTSN. Residues Ser-489, Ser-495, and Ser-498 each carry the phosphoserine modification. Thr-500 carries the phosphothreonine modification. Residues 641-652 are compositionally biased toward low complexity; sequence QDQQQYQQQQQE.

The protein belongs to the protein kinase superfamily. Ser/Thr protein kinase family.

Its subcellular location is the cytoplasm. It localises to the cell cortex. Functionally, may play a role in subcellular trafficking between the endoplasmic reticulum and Golgi apparatus. This chain is Nuclear receptor-binding protein homolog, found in Drosophila pseudoobscura pseudoobscura (Fruit fly).